A 188-amino-acid chain; its full sequence is MSRLTVYRDDAPDTILLDVTTPGEIAETLRPHNIRFDRWSAPITPAPDAPAEEVLDAYRPYLDTLMGETGAGSADVVRINASTPNLPELRKKFLSEHTHSEDEVRFFVHGQGAFVLHIRGRVYSVLCTQGDLISVPAGIPHWFDAGPSPDVVALRVFTDTTGWIAQYTGDDIANRFPAEVPVEASGNS.

Residues His-97, His-99, Glu-103, and His-141 each contribute to the Fe(2+) site. Ni(2+)-binding residues include His-97, His-99, Glu-103, and His-141.

This sequence belongs to the acireductone dioxygenase (ARD) family. As to quaternary structure, monomer. The cofactor is Fe(2+). Requires Ni(2+) as cofactor.

The catalysed reaction is 1,2-dihydroxy-5-(methylsulfanyl)pent-1-en-3-one + O2 = 3-(methylsulfanyl)propanoate + CO + formate + 2 H(+). It catalyses the reaction 1,2-dihydroxy-5-(methylsulfanyl)pent-1-en-3-one + O2 = 4-methylsulfanyl-2-oxobutanoate + formate + 2 H(+). It functions in the pathway amino-acid biosynthesis; L-methionine biosynthesis via salvage pathway; L-methionine from S-methyl-5-thio-alpha-D-ribose 1-phosphate: step 5/6. In terms of biological role, catalyzes 2 different reactions between oxygen and the acireductone 1,2-dihydroxy-3-keto-5-methylthiopentene (DHK-MTPene) depending upon the metal bound in the active site. Fe-containing acireductone dioxygenase (Fe-ARD) produces formate and 2-keto-4-methylthiobutyrate (KMTB), the alpha-ketoacid precursor of methionine in the methionine recycle pathway. Ni-containing acireductone dioxygenase (Ni-ARD) produces methylthiopropionate, carbon monoxide and formate, and does not lie on the methionine recycle pathway. The sequence is that of Acireductone dioxygenase from Gluconobacter oxydans (strain 621H) (Gluconobacter suboxydans).